We begin with the raw amino-acid sequence, 164 residues long: Anterior gradient protein 3 (164 aa).

An N-terminal signal peptide occupies residues 1 to 19 (MYFPMIELTLVLLASSNLA). The Prevents secretion from ER signature appears at 161 to 164 (QTEL).

The protein belongs to the AGR family.

It localises to the endoplasmic reticulum. The protein localises to the cytoplasm. Required for calcium-mediated regulation of ciliary beat frequency in the airway. The protein is Anterior gradient protein 3 of Xenopus tropicalis (Western clawed frog).